The following is a 376-amino-acid chain: Multiphosphoryl transfer protein (376 aa).

Residues 2–142 enclose the PTS EIIA type-2 domain; it reads FQLSVQDIHP…EELRALLMGE (141 aa). Histidine 62 acts as the Tele-phosphohistidine intermediate; for EIIA activity in catalysis. Histidine 62 bears the Phosphohistidine; by HPr mark. Residues 156-284 form a m domain region; it reads TLDVIASSLV…LTSDDALTDD (129 aa). The HPr domain maps to 285 to 375; sequence VLSAEFVVRN…DAIAAGLGEG (91 aa). Residue histidine 299 is the Pros-phosphohistidine intermediate; for HPr activity of the active site. Histidine 299 is modified (phosphohistidine; by EI).

It is found in the cytoplasm. In terms of biological role, the phosphoenolpyruvate-dependent sugar phosphotransferase system (sugar PTS), a major carbohydrate active transport system, catalyzes the phosphorylation of incoming sugar substrates concomitantly with their translocation across the cell membrane. The enzyme II FruAB PTS system is involved in fructose transport. In Salmonella typhi, this protein is Multiphosphoryl transfer protein (fruB).